Here is a 157-residue protein sequence, read N- to C-terminus: RxLR effector protein PITG_04049 (157 aa).

A signal peptide spans 1–23 (MRLIAGVLAGFLVICEVTSTSES). The short motif at 51 to 65 (QFLRTDVVMNRGEER) is the RxLR-dEER element.

This sequence belongs to the RxLR effector family.

It is found in the secreted. It localises to the host cytoplasm. Its subcellular location is the host nucleus. In terms of biological role, effector that might be involved in host plant infection. The polypeptide is RxLR effector protein PITG_04049 (Phytophthora infestans (strain T30-4) (Potato late blight agent)).